The sequence spans 492 residues: Ketol-acid reductoisomerase (NADP(+)) (492 aa).

A KARI N-terminal Rossmann domain is found at 14-208 (LDQLGKCRFM…GGHRAGVLQS (195 aa)). Residues 45–48 (CGAQ), R68, R76, S78, and 108–110 (DKQ) each bind NADP(+). H132 is a catalytic residue. G158 provides a ligand contact to NADP(+). KARI C-terminal knotted domains lie at 209–344 (SFVA…NAPQ) and 345–485 (FDGK…MKDM). Mg(2+)-binding residues include D217, E221, E389, and E393. S414 serves as a coordination point for substrate.

It belongs to the ketol-acid reductoisomerase family. Requires Mg(2+) as cofactor.

The enzyme catalyses (2R)-2,3-dihydroxy-3-methylbutanoate + NADP(+) = (2S)-2-acetolactate + NADPH + H(+). The catalysed reaction is (2R,3R)-2,3-dihydroxy-3-methylpentanoate + NADP(+) = (S)-2-ethyl-2-hydroxy-3-oxobutanoate + NADPH + H(+). Its pathway is amino-acid biosynthesis; L-isoleucine biosynthesis; L-isoleucine from 2-oxobutanoate: step 2/4. The protein operates within amino-acid biosynthesis; L-valine biosynthesis; L-valine from pyruvate: step 2/4. Functionally, involved in the biosynthesis of branched-chain amino acids (BCAA). Catalyzes an alkyl-migration followed by a ketol-acid reduction of (S)-2-acetolactate (S2AL) to yield (R)-2,3-dihydroxy-isovalerate. In the isomerase reaction, S2AL is rearranged via a Mg-dependent methyl migration to produce 3-hydroxy-3-methyl-2-ketobutyrate (HMKB). In the reductase reaction, this 2-ketoacid undergoes a metal-dependent reduction by NADPH to yield (R)-2,3-dihydroxy-isovalerate. This is Ketol-acid reductoisomerase (NADP(+)) from Pectobacterium atrosepticum (strain SCRI 1043 / ATCC BAA-672) (Erwinia carotovora subsp. atroseptica).